Reading from the N-terminus, the 234-residue chain is Cytochrome b (234 aa).

4 helical membrane-spanning segments follow: residues 33 to 53 (FGSL…FLAM), 77 to 98 (WLIR…YMHV), 113 to 133 (WNIG…GYVL), and 178 to 198 (FFAF…IHLL). Heme b contacts are provided by His83 and His97. Heme b is bound by residues His182 and His196. His201 contacts a ubiquinone. Residues 226 to 234 (IKDLLGFLV) form a helical membrane-spanning segment.

This sequence belongs to the cytochrome b family. In terms of assembly, the cytochrome bc1 complex contains 11 subunits: 3 respiratory subunits (MT-CYB, CYC1 and UQCRFS1), 2 core proteins (UQCRC1 and UQCRC2) and 6 low-molecular weight proteins (UQCRH/QCR6, UQCRB/QCR7, UQCRQ/QCR8, UQCR10/QCR9, UQCR11/QCR10 and a cleavage product of UQCRFS1). This cytochrome bc1 complex then forms a dimer. Heme b serves as cofactor.

The protein resides in the mitochondrion inner membrane. Functionally, component of the ubiquinol-cytochrome c reductase complex (complex III or cytochrome b-c1 complex) that is part of the mitochondrial respiratory chain. The b-c1 complex mediates electron transfer from ubiquinol to cytochrome c. Contributes to the generation of a proton gradient across the mitochondrial membrane that is then used for ATP synthesis. The sequence is that of Cytochrome b (MT-CYB) from Lepus arcticus (Arctic hare).